Consider the following 381-residue polypeptide: cAMP-dependent protein kinase type I-beta regulatory subunit (381 aa).

The segment at 1–136 is dimerization and phosphorylation; the sequence is MASPSCFHSE…ALAKAISKNV (136 aa). Residue Ser3 is modified to Phosphoserine. Residue Tyr21 is modified to 3'-nitrotyrosine. The disordered stretch occupies residues 66–88; sequence LARQKSNSQCDSHDEEISPTPPN. 2 positions are modified to phosphoserine: Ser77 and Ser83. A Phosphothreonine modification is found at Thr85. A Pseudophosphorylation motif motif is present at residues 96 to 100; sequence RRGGV. Position 97 is an omega-N-methylarginine (Arg97). Residues 137 to 254, Glu202, Arg211, 255 to 381, Glu326, and Arg335 each bind 3',5'-cyclic AMP; these read LFSH…SKVS and ILES…SLTV.

This sequence belongs to the cAMP-dependent kinase regulatory chain family. As to quaternary structure, the inactive holoenzyme is composed of two regulatory chains and two catalytic chains. Activation by cAMP releases the two active catalytic monomers and the regulatory dimer. Interacts with PRKX; regulates this cAMP-dependent protein kinase. Interacts with smAKAP; this interaction may target PRKAR1B to the plasma membrane. The pseudophosphorylation site binds to the substrate-binding region of the catalytic chain, resulting in the inhibition of its activity. As to expression, abundant in brain and testis. No expression in lung, heart, liver, spleen, kidney and skeletal muscle.

It localises to the cell membrane. Functionally, regulatory subunit of the cAMP-dependent protein kinases involved in cAMP signaling in cells. This chain is cAMP-dependent protein kinase type I-beta regulatory subunit (Prkar1b), found in Rattus norvegicus (Rat).